The primary structure comprises 481 residues: N-succinylglutamate 5-semialdehyde dehydrogenase (481 aa).

206–211 (GSARTG) is an NAD(+) binding site. Catalysis depends on residues Glu-229 and Cys-263.

The protein belongs to the aldehyde dehydrogenase family. AstD subfamily.

It catalyses the reaction N-succinyl-L-glutamate 5-semialdehyde + NAD(+) + H2O = N-succinyl-L-glutamate + NADH + 2 H(+). The protein operates within amino-acid degradation; L-arginine degradation via AST pathway; L-glutamate and succinate from L-arginine: step 4/5. Catalyzes the NAD-dependent reduction of succinylglutamate semialdehyde into succinylglutamate. The protein is N-succinylglutamate 5-semialdehyde dehydrogenase of Sphingopyxis alaskensis (strain DSM 13593 / LMG 18877 / RB2256) (Sphingomonas alaskensis).